The chain runs to 355 residues: Protein ATP1B4 (355 aa).

Residues 1–108 (MRRQLRSRRA…SLARTGQSWS (108 aa)) lie on the Nuclear side of the membrane. The tract at residues 33-77 (ADEEEEAEEEARVMVVPDLEEEEEEEEEKEEEEKEEEDSHSQETD) is disordered. Residues 50–68 (DLEEEEEEEEEKEEEEKEE) show a composition bias toward acidic residues. A helical; Signal-anchor for type II membrane protein transmembrane segment spans residues 109–129 (LILVIYFFFYASLAAVITLCM). Residues 130-355 (YTLFLTISPY…RVIFTLNIET (226 aa)) are Perinuclear space-facing.

This sequence belongs to the X(+)/potassium ATPases subunit beta family. As to quaternary structure, associates with a SMAD7-transcriptional complex. Interacts with SNW1 and TOR1AIP1. Does not associate with known Na,K-ATPase alpha-subunits.

The protein localises to the nucleus inner membrane. Its function is as follows. May act as a transcriptional coregulator during muscle development through its interaction with SNW1. Has lost its ancestral function as a Na,K-ATPase beta-subunit. The sequence is that of Protein ATP1B4 (ATP1B4) from Bos taurus (Bovine).